The sequence spans 297 residues: Bifunctional protein FolD 2 (297 aa).

Residues 173–175 (GKS), S198, and I239 each bind NADP(+).

It belongs to the tetrahydrofolate dehydrogenase/cyclohydrolase family. Homodimer.

The enzyme catalyses (6R)-5,10-methylene-5,6,7,8-tetrahydrofolate + NADP(+) = (6R)-5,10-methenyltetrahydrofolate + NADPH. It catalyses the reaction (6R)-5,10-methenyltetrahydrofolate + H2O = (6R)-10-formyltetrahydrofolate + H(+). Its pathway is one-carbon metabolism; tetrahydrofolate interconversion. Functionally, catalyzes the oxidation of 5,10-methylenetetrahydrofolate to 5,10-methenyltetrahydrofolate and then the hydrolysis of 5,10-methenyltetrahydrofolate to 10-formyltetrahydrofolate. In Sinorhizobium medicae (strain WSM419) (Ensifer medicae), this protein is Bifunctional protein FolD 2.